Here is a 248-residue protein sequence, read N- to C-terminus: FCS-Like Zinc finger 14 (248 aa).

Over residues 85 to 94 (VCRSEPNQPG) the composition is skewed to polar residues. The tract at residues 85-108 (VCRSEPNQPGRSDPVQFMSHGGST) is disordered. An FLZ-type zinc finger spans residues 181 to 224 (GFLNSCYLCRKKLHGQDIFIYRGEKAFCSTECRSSHIANDERKE).

It belongs to the FLZ family. As to quaternary structure, interacts with KIN10 and KIN11 via its FLZ-type zinc finger domain. Interacts with KINB1, KINB2 and KINB3 via its N-terminal part.

Its subcellular location is the cytoplasm. The protein localises to the nucleus. In terms of biological role, may act as an adapter to facilitate the interaction of SnRK1 complex with effector proteins, conferring tissue- and stimulus-type specific differences in the SnRK1 regulation pathway. This chain is FCS-Like Zinc finger 14, found in Arabidopsis thaliana (Mouse-ear cress).